We begin with the raw amino-acid sequence, 384 residues long: Spermidine/putrescine import ATP-binding protein PotA (384 aa).

Residues 6–238 enclose the ABC transporter domain; it reads ITFNNVSKTF…PINHFVANFI (233 aa). 40–47 contacts ATP; sequence GASGSGKS.

Belongs to the ABC transporter superfamily. Spermidine/putrescine importer (TC 3.A.1.11.1) family. As to quaternary structure, the complex is composed of two ATP-binding proteins (PotA), two transmembrane proteins (PotB and PotC) and a solute-binding protein (PotD).

The protein localises to the cell membrane. It carries out the reaction ATP + H2O + polyamine-[polyamine-binding protein]Side 1 = ADP + phosphate + polyamineSide 2 + [polyamine-binding protein]Side 1.. In terms of biological role, part of the ABC transporter complex PotABCD involved in spermidine/putrescine import. Responsible for energy coupling to the transport system. The chain is Spermidine/putrescine import ATP-binding protein PotA from Streptococcus pyogenes serotype M18 (strain MGAS8232).